Consider the following 106-residue polypeptide: Large ribosomal subunit protein uL24 (106 aa).

The protein belongs to the universal ribosomal protein uL24 family. In terms of assembly, part of the 50S ribosomal subunit.

Its function is as follows. One of two assembly initiator proteins, it binds directly to the 5'-end of the 23S rRNA, where it nucleates assembly of the 50S subunit. Functionally, one of the proteins that surrounds the polypeptide exit tunnel on the outside of the subunit. The sequence is that of Large ribosomal subunit protein uL24 from Paramagnetospirillum magneticum (strain ATCC 700264 / AMB-1) (Magnetospirillum magneticum).